A 201-amino-acid chain; its full sequence is Adenylyl-sulfate kinase (201 aa).

Position 35–42 (35–42 (GLSGSGKS)) interacts with ATP. Catalysis depends on serine 109, which acts as the Phosphoserine intermediate.

This sequence belongs to the APS kinase family.

It carries out the reaction adenosine 5'-phosphosulfate + ATP = 3'-phosphoadenylyl sulfate + ADP + H(+). It functions in the pathway sulfur metabolism; hydrogen sulfide biosynthesis; sulfite from sulfate: step 2/3. Functionally, catalyzes the synthesis of activated sulfate. This is Adenylyl-sulfate kinase from Citrobacter koseri (strain ATCC BAA-895 / CDC 4225-83 / SGSC4696).